The primary structure comprises 213 residues: Probable septum site-determining protein MinC (213 aa).

Belongs to the MinC family. As to quaternary structure, interacts with MinD and FtsZ.

In terms of biological role, cell division inhibitor that blocks the formation of polar Z ring septums. Rapidly oscillates between the poles of the cell to destabilize FtsZ filaments that have formed before they mature into polar Z rings. Prevents FtsZ polymerization. This chain is Probable septum site-determining protein MinC, found in Pseudothermotoga lettingae (strain ATCC BAA-301 / DSM 14385 / NBRC 107922 / TMO) (Thermotoga lettingae).